Reading from the N-terminus, the 233-residue chain is 5'-methylthioadenosine/S-adenosylhomocysteine nucleosidase (233 aa).

The active-site Proton acceptor is the Glu-12. Substrate is bound by residues Gly-78, Ile-152, and 173–174 (ME). Asp-197 functions as the Proton donor in the catalytic mechanism.

This sequence belongs to the PNP/UDP phosphorylase family. MtnN subfamily. Homodimer.

It carries out the reaction S-adenosyl-L-homocysteine + H2O = S-(5-deoxy-D-ribos-5-yl)-L-homocysteine + adenine. The enzyme catalyses S-methyl-5'-thioadenosine + H2O = 5-(methylsulfanyl)-D-ribose + adenine. It catalyses the reaction 5'-deoxyadenosine + H2O = 5-deoxy-D-ribose + adenine. It participates in amino-acid biosynthesis; L-methionine biosynthesis via salvage pathway; S-methyl-5-thio-alpha-D-ribose 1-phosphate from S-methyl-5'-thioadenosine (hydrolase route): step 1/2. Catalyzes the irreversible cleavage of the glycosidic bond in both 5'-methylthioadenosine (MTA) and S-adenosylhomocysteine (SAH/AdoHcy) to adenine and the corresponding thioribose, 5'-methylthioribose and S-ribosylhomocysteine, respectively. Also cleaves 5'-deoxyadenosine, a toxic by-product of radical S-adenosylmethionine (SAM) enzymes, into 5-deoxyribose and adenine. Thus, is required for in vivo function of the radical SAM enzymes biotin synthase and lipoic acid synthase, that are inhibited by 5'-deoxyadenosine accumulation. In Yersinia enterocolitica serotype O:8 / biotype 1B (strain NCTC 13174 / 8081), this protein is 5'-methylthioadenosine/S-adenosylhomocysteine nucleosidase.